A 175-amino-acid chain; its full sequence is S-fimbrial protein subunit SfaG (175 aa).

The signal sequence occupies residues 1–27 (MVKDIIKTVTFSCMLAGSMFVTCHVCA). Cys43 and Cys83 form a disulfide bridge.

The protein belongs to the fimbrial protein family.

The protein resides in the fimbrium. Its function is as follows. Fimbriae (also called pili), polar filaments radiating from the surface of the bacterium to a length of 0.5-1.5 micrometers and numbering 100-300 per cell, enable bacteria to colonize the epithelium of specific host organs. A minor fimbrial subunit. This protein is necessary for full expression of S-specific binding. S-fimbrial adhesins enable pathogenic E.coli causing urinary-tract infections or newborn meningitis to attach to glycoproteins terminating with alpha-sialic acid-(2-3)-beta-Gal. This chain is S-fimbrial protein subunit SfaG (sfaG), found in Escherichia coli O6:K15:H31 (strain 536 / UPEC).